The following is a 343-amino-acid chain: Small ribosomal subunit biogenesis GTPase RsgA (343 aa).

The CP-type G domain occupies 116 to 275 (RGQLKPVAAN…LIDSPGIREF (160 aa)). Residues 163–166 (NKAD) and 217–225 (GQSGVGKSS) each bind GTP. Residues C299, C304, H306, and C312 each contribute to the Zn(2+) site.

This sequence belongs to the TRAFAC class YlqF/YawG GTPase family. RsgA subfamily. Monomer. Associates with 30S ribosomal subunit, binds 16S rRNA. It depends on Zn(2+) as a cofactor.

It is found in the cytoplasm. Functionally, one of several proteins that assist in the late maturation steps of the functional core of the 30S ribosomal subunit. Helps release RbfA from mature subunits. May play a role in the assembly of ribosomal proteins into the subunit. Circularly permuted GTPase that catalyzes slow GTP hydrolysis, GTPase activity is stimulated by the 30S ribosomal subunit. This chain is Small ribosomal subunit biogenesis GTPase RsgA, found in Pseudomonas syringae pv. tomato (strain ATCC BAA-871 / DC3000).